The sequence spans 233 residues: MDQEEGLKALDNIVTQFNAYEDFLDSQITTVDLYYLEDETLARQLVELGYRGTGERVKREDFEARKAAIEIARLAERAQQKTLTSAGKDLQDNFLTALAMREEDNRSGKLSSVIFIRDRNSHGQEISGYIDYAHRLKTEDFEVYFTGKKRLLPRPTDISFYNWDADIAVSNSSPNYQVIADNPEGLLFRYKRDRKILNVDPKAQPGDNSTRITILTELYVQAVIFDHISRRKT.

The protein resides in the cytoplasm. The protein localises to the nucleus. May be involved in spermatogenesis. This Homo sapiens (Human) protein is Cilia- and flagella-associated protein 299.